The chain runs to 116 residues: Ribulose bisphosphate carboxylase small subunit 1 (116 aa).

The protein belongs to the RuBisCO small chain family. In terms of assembly, heterohexadecamer of 8 large and 8 small subunits.

Its subcellular location is the cytoplasm. Functionally, ruBisCO catalyzes two reactions: the carboxylation of D-ribulose 1,5-bisphosphate, the primary event in carbon dioxide fixation, as well as the oxidative fragmentation of the pentose substrate. Both reactions occur simultaneously and in competition at the same active site. Although the small subunit is not catalytic it is essential for maximal activity. Can replace the endogenous type I ccbS gene in H.neapolitanus, reconstituting RuBisCO with about 10% of normal activity; the active enzyme is targeted to carboxysomes. The sequence is that of Ribulose bisphosphate carboxylase small subunit 1 from Hydrogenovibrio crunogenus (strain DSM 25203 / XCL-2) (Thiomicrospira crunogena).